The primary structure comprises 356 residues: MTRPIQASLDLQVMKQNLAIVRRAAPEARVWSVVKANAYGHGIERVWSALGATDGFAMLNLEEAITLRERGWKGPILMLEGFFHAQDLEAYDTYRLTTCIHSNWQLKALQNARLNAPLDIYVKVNSGMNRLGFQPERAQTVWQQLRAMRNVGEMTLMSHFAQADHPEGIGEAMRRIALATEGLQCAYSLSNSAATLWHPQAHYDWVRPGIILYGASPSGQWRDIADTGLKPVMTLSSEIIGVQTLSAGERVGYGGGYSVTQEQRIGIVAAGYADGYPRHAPTGTPVLVDGIRTRTVGTVSMDMLAVDLTPCPQAGIGTPVELWGKEIKVDDVASAAGTLGYELLCAVAPRVPFVTT.

Residue Lys-35 is the Proton acceptor; specific for D-alanine of the active site. The residue at position 35 (Lys-35) is an N6-(pyridoxal phosphate)lysine. Arg-130 contacts substrate. The active-site Proton acceptor; specific for L-alanine is Tyr-253. A substrate-binding site is contributed by Met-301.

It belongs to the alanine racemase family. In terms of assembly, monomer. Pyridoxal 5'-phosphate is required as a cofactor.

The enzyme catalyses L-alanine = D-alanine. With respect to regulation, inactivated by D- and L-beta-fluoroalanine, D- and L-beta-chloroalanine, and O-acetyl-D-serine. In terms of biological role, isomerizes L-alanine to D-alanine which is then oxidized to pyruvate by DadA. The sequence is that of Alanine racemase, catabolic (dadX) from Salmonella typhimurium (strain LT2 / SGSC1412 / ATCC 700720).